The sequence spans 914 residues: MEFIMKTRMFEEEGWIRKKCKVCGKPFWTLDPDRETCGDPPCDEYQFIGKPGIPKKYTLDEMREKFLKFFEKHEVYPHGRVKRYPVLPRWRDDVLLVGASIMDFQPWVISGEADPPANPLVISQPSIRFTDIDNVGITGRHFTIFEMMAHHAFNYPGKPIYWIDETVELAFEFFTKELKMKPEDITFKENPWAGGGNAGPAFEVLYRGLEVATLVFMQYKKAPENAPEDQVVIIKGDRYVPMETKVVDTGYGLERLVWMSQGTPTAYDAVLGYVVEPLKRMAGVEKIDERILMENSRLAGMFDIEDMGDLKLLRKKVAEKVGISVEELEKAIRPYELIYAIADHTKALTFMLADGVIPSNVKAGYLARLLIRKSIRHLKELGLEVPLSEIVALHIKELHKTFPEFKEMEDVILEIIDLEEKKYSETLKRGSDLVRREIAKLKKKGMSEIPLEKLITFYESHGLTPELVKEIAEKEGIKVHVPDNFYSIVAKEAEKEKEEKEEEVVDFELVKDLPETRTLYYEDPFMKEFEARVLRVIGDWIVLDQTAFYPEGGGQPYDTGVLFVNGSEVKVTNVQKVGKVIVHKVENPGLFKEGMEVRGRIDWDRRIQHMRHHTGTHVLMGALVRVLGKHVWQAGSQLTTDWARLDISHYKRISDEELREIERLANRIVMEDRKVTWEWLPRTEAEQRYGFRLYQGGVVPGRVIRVVKIEDWDVQACGGTHLPSTGLVGPIKILRTERIQDGVERIIFACGEAAIKEWQKEREILKKASQVLRVPPEKLPETAERFFNEWKEARKEVEKLKKELAKLLVYELEAKVQKVKEYEFIGEIVEGSMDDLREAVERLKKPNRIVVLVSKEGYFAISVGDNVNLNANDLAKKLTSIAGGGGGGRKDVAQGRIKDVSKAKEAIESIVKLL.

Zn(2+) is bound by residues H613, H617, C717, and H721.

This sequence belongs to the class-II aminoacyl-tRNA synthetase family. Zn(2+) serves as cofactor.

It is found in the cytoplasm. The catalysed reaction is tRNA(Ala) + L-alanine + ATP = L-alanyl-tRNA(Ala) + AMP + diphosphate. Catalyzes the attachment of alanine to tRNA(Ala) in a two-step reaction: alanine is first activated by ATP to form Ala-AMP and then transferred to the acceptor end of tRNA(Ala). Also edits incorrectly charged Ser-tRNA(Ala) and Gly-tRNA(Ala) via its editing domain. The sequence is that of Alanine--tRNA ligase from Pyrococcus abyssi (strain GE5 / Orsay).